A 130-amino-acid polypeptide reads, in one-letter code: UPF0102 protein TDE_2303 (130 aa).

Belongs to the UPF0102 family.

The sequence is that of UPF0102 protein TDE_2303 from Treponema denticola (strain ATCC 35405 / DSM 14222 / CIP 103919 / JCM 8153 / KCTC 15104).